The sequence spans 135 residues: Retinol-binding protein 1 (135 aa).

The tract at residues 22 to 32 (RALDVNVALRK) is important for interaction with STRA6. Residues lysine 41, methionine 63, and glutamine 109 each contribute to the all-trans-retinol site.

The protein belongs to the calycin superfamily. Fatty-acid binding protein (FABP) family. Interacts (only as retinol-free apoprotein) with STRA6.

The protein resides in the cytoplasm. It localises to the lipid droplet. Its function is as follows. Cytoplasmic retinol-binding protein. Accepts retinol from the transport protein STRA6, and thereby contributes to retinol uptake, storage and retinoid homeostasis. The sequence is that of Retinol-binding protein 1 (RBP1) from Bos taurus (Bovine).